The sequence spans 3326 residues: Protein unc-80 homolog (3326 aa).

The span at 152–164 (IENQGSPGQPCRS) shows a compositional bias: polar residues. Disordered stretches follow at residues 152-178 (IENQGSPGQPCRSSSHDEEENNRRKTF), 243-267 (KRSSPINSQSQTCESPNQDTRQQGE), 283-317 (PKATISGCHQGNSFDGSLSSQTSQERGPSHSRASL), and 450-469 (RKEDRERKGSIPFHHTGKRR). A Phosphoserine modification is found at S257. Over residues 283–308 (PKATISGCHQGNSFDGSLSSQTSQER) the composition is skewed to polar residues. S526 is modified (phosphoserine). Disordered regions lie at residues 536 to 560 (LSARHSHSHHTLVSDLPDHSNSHGE), 697 to 785 (RKKS…DNIP), 967 to 1076 (GKKV…SRRI), 1405 to 1430 (EDSKDSLHSSSHTIKSDAGAEEKKVP), and 1469 to 1516 (SSKL…LSNA). 2 stretches are compositionally biased toward basic and acidic residues: residues 551 to 560 (LPDHSNSHGE) and 699 to 713 (KSENKENESVEKRPS). Positions 723 to 737 (SSSSTSGFGAPSASG) are enriched in low complexity. Gly residues predominate over residues 738–770 (AGDGGGEEGGGGDGGGGGGGGDGGGGGGGGGGP). Over residues 772–783 (EKNEKNQEKDDN) the composition is skewed to basic and acidic residues. Positions 1038 to 1055 (SQSAASDTSSQSEQDTSE) are enriched in low complexity. A compositionally biased stretch (basic and acidic residues) spans 1418 to 1429 (IKSDAGAEEKKV). A run of 2 helical transmembrane segments spans residues 2336 to 2356 (PFVLQLFASVAPLLEFPDAAN) and 2466 to 2486 (IAATAALATSLQALLYSVEVL). Residues 2493 to 2515 (PQMSRSDQGHKGTTTANHTMSSG) are disordered. 2 helical membrane passes run 2853–2873 (GLAESTSQAAYLALKVILVCF) and 2899–2919 (LALWDFLDFIVRTRIPIFVLL). The segment covering 3010 to 3032 (NTGTGTVWEQDSEPSQQASQDTL) has biased composition (polar residues). Positions 3010-3052 (NTGTGTVWEQDSEPSQQASQDTLSRTDEEDEENDSVSMPSVVS) are disordered. S3110 is subject to Phosphoserine. Disordered regions lie at residues 3122–3222 (LQQP…VLTS), 3236–3271 (PKQSEPLLAEEGEKKEDEEIQGATAHCPLSTQLSDP), and 3296–3326 (NGTENPLLSSQFTFTPPELGDTDSALDESHV). The span at 3127 to 3136 (GRKRGLRQLR) shows a compositional bias: basic residues. Residues 3157–3168 (LSTTRRSIQPKT) are compositionally biased toward polar residues. Residues 3298–3309 (TENPLLSSQFTF) show a composition bias toward polar residues. Acidic residues predominate over residues 3315-3326 (GDTDSALDESHV).

The protein belongs to the unc-80 family. As to quaternary structure, NALCN complex consists of NALCN and auxiliary subunits, UNC79, UNC80 and NACL1. These auxiliary subunits are essential for the NALCN complex function. Interacts (via N-terminus half) with NALCN; this interaction facilitates NALCN surface localization. Interacts (via C-terminus) with UNC79. UNC80 bridges NALCN to UNC79. In terms of processing, phosphorylated on tyrosine residues. As to expression, expressed almost exclusively in the brain. Expressed in hippocampus and ventral tegmental area neurons.

The protein localises to the cell membrane. It localises to the cell projection. The protein resides in the dendrite. Auxiliary subunit of the NALCN sodium channel complex. The NALCN sodium channel complex is a voltage-gated ion channel responsible for the resting Na(+) permeability that controls neuronal excitability. This complex is activated by neuropeptides substance P, neurotensin. In addition, the channel is inhibited by extracellular Ca(2+) through the Ca(2+)-sensing receptor. UNC80 is essential for NALCN sensitivity to extracellular calcium. The protein is Protein unc-80 homolog (Unc80) of Mus musculus (Mouse).